Here is a 156-residue protein sequence, read N- to C-terminus: MPRKGPAPKRPVVADPVYGAPIVSQLVNKILLDGKKGLAERIVYDALAGVAAKNGQDAVVTLKKALDNVRPALEVRSRRVGGSTYQVPIEVKPHRANTLALRWLTTYAKSRREKTMTERLTNEILDASNGLGAAVKRREDTHKMAESNKAFAHYRW.

Belongs to the universal ribosomal protein uS7 family. As to quaternary structure, part of the 30S ribosomal subunit. Contacts proteins S9 and S11.

Functionally, one of the primary rRNA binding proteins, it binds directly to 16S rRNA where it nucleates assembly of the head domain of the 30S subunit. Is located at the subunit interface close to the decoding center, probably blocks exit of the E-site tRNA. This Clavibacter sepedonicus (Clavibacter michiganensis subsp. sepedonicus) protein is Small ribosomal subunit protein uS7.